The chain runs to 309 residues: Probable manganese-dependent inorganic pyrophosphatase (309 aa).

Residues histidine 9, aspartate 13, aspartate 15, aspartate 75, histidine 97, and aspartate 149 each contribute to the Mn(2+) site.

The protein belongs to the PPase class C family. Mn(2+) serves as cofactor.

It localises to the cytoplasm. It carries out the reaction diphosphate + H2O = 2 phosphate + H(+). The polypeptide is Probable manganese-dependent inorganic pyrophosphatase (Staphylococcus epidermidis (strain ATCC 35984 / DSM 28319 / BCRC 17069 / CCUG 31568 / BM 3577 / RP62A)).